Here is a 607-residue protein sequence, read N- to C-terminus: UvrABC system protein C (607 aa).

One can recognise a GIY-YIG domain in the interval 15-92; it reads SQPGSYQMKD…IKRYRPYFNI (78 aa). The 36-residue stretch at 197-232 folds into the UVR domain; that stretch reads GKAISDIKKKMKRASDSTEYELAADFRDRLKFIDQT.

It belongs to the UvrC family. Interacts with UvrB in an incision complex.

The protein localises to the cytoplasm. Its function is as follows. The UvrABC repair system catalyzes the recognition and processing of DNA lesions. UvrC both incises the 5' and 3' sides of the lesion. The N-terminal half is responsible for the 3' incision and the C-terminal half is responsible for the 5' incision. The sequence is that of UvrABC system protein C from Oenococcus oeni (strain ATCC BAA-331 / PSU-1).